A 188-amino-acid polypeptide reads, in one-letter code: Tetratricopeptide repeat protein 36 (188 aa).

TPR repeat units lie at residues 50-83 (SKAL…LPER), 85-117 (SAYN…SGGR), and 122-155 (RQGF…GSPF).

It belongs to the TTC36 family.

This is Tetratricopeptide repeat protein 36 (TTC36) from Bos taurus (Bovine).